We begin with the raw amino-acid sequence, 102 residues long: Large ribosomal subunit protein bL21 (102 aa).

The protein belongs to the bacterial ribosomal protein bL21 family. Part of the 50S ribosomal subunit. Contacts protein L20.

Its function is as follows. This protein binds to 23S rRNA in the presence of protein L20. The polypeptide is Large ribosomal subunit protein bL21 (Geotalea uraniireducens (strain Rf4) (Geobacter uraniireducens)).